The sequence spans 513 residues: MKLAYWMYAGPAHIGTLRVASSFKNVHAIMHAPLGDDYFNVMRSMLERERDFTPVTASIVDRHVLARGSQEKVVENITRKDQEENPDLIVLTPTCTSSILQEDLQNFVNRSSMSSKCDVILADVNHYRVNELQAADRTLEQIIKYYLNDAVKQKNVDRSITEYPSVNIIGFFTLGFHQQHDCRELKRLFNDLGIQINQIIPEGGSVTDIKNLPNAWFNVVPYREIGLMTATFLEKEFGMPYVSTTPMGIVDTAKFIRELQFYVNFYALEKIGYKVNYESYIDQQTRFVSQAAWFSRSIDCQNLTGKKAFVYGDSTHAVSMTKILSREMGINVICAGTYCKQDSQWFKEQVSEYCEQILITDNHTEVGDMIAKLEPSAIFGTQMERHIGKRLGIPCGVISAPVHIQNFPLSYRPFLGYEGTNQIADLVYNSFTLGMEDHLLEIFGGHDTKEVITKSLSTDLDLTWTMESQKELSKIPGFVRGKIKRNTEKYAREKGITSITVEVMYAAKESLSA.

Position 36 (aspartate 36) interacts with [4Fe-4S] cluster. The Proton donor role is filled by aspartate 299. Glycine 434–methionine 435 lines the substrate pocket.

The protein belongs to the ChlB/BchB/BchZ family. As to quaternary structure, protochlorophyllide reductase is composed of three subunits; ChlL, ChlN and ChlB. Forms a heterotetramer of two ChlB and two ChlN subunits. The cofactor is [4Fe-4S] cluster.

It localises to the plastid. The protein localises to the chloroplast. It catalyses the reaction chlorophyllide a + oxidized 2[4Fe-4S]-[ferredoxin] + 2 ADP + 2 phosphate = protochlorophyllide a + reduced 2[4Fe-4S]-[ferredoxin] + 2 ATP + 2 H2O. Its pathway is porphyrin-containing compound metabolism; chlorophyll biosynthesis (light-independent). Component of the dark-operative protochlorophyllide reductase (DPOR) that uses Mg-ATP and reduced ferredoxin to reduce ring D of protochlorophyllide (Pchlide) to form chlorophyllide a (Chlide). This reaction is light-independent. The NB-protein (ChlN-ChlB) is the catalytic component of the complex. This is Light-independent protochlorophyllide reductase subunit B from Chaetosphaeridium globosum (Charophycean green alga).